The primary structure comprises 420 residues: Methylaspartate ammonia-lyase 1 (420 aa).

Q173 is a (2S,3S)-3-methyl-L-aspartate binding site. Positions 237, 272, and 306 each coordinate Mg(2+). Q328 is a (2S,3S)-3-methyl-L-aspartate binding site. Residue K330 is the Proton acceptor of the active site. A (2S,3S)-3-methyl-L-aspartate-binding site is contributed by 359–360; sequence SC.

As to quaternary structure, homodimer. Mg(2+) is required as a cofactor.

It carries out the reaction (2S,3S)-3-methyl-L-aspartate = mesaconate + NH4(+). It functions in the pathway amino-acid degradation; L-glutamate degradation via mesaconate pathway; acetate and pyruvate from L-glutamate: step 2/4. Involved in the methylaspartate cycle. Catalyzes the formation of the alpha,beta-unsaturated bond by the reversible anti elimination of ammonia from L-threo-beta-methylaspartate (L-threo-(2S,3S)-3-methylaspartate) to give mesaconate. It can also catalyze the amination of fumarate and ethylfumarate, and the deamination of hydroxylamine, hydrazine, methylamine and ethylamine. This Carboxydothermus hydrogenoformans (strain ATCC BAA-161 / DSM 6008 / Z-2901) protein is Methylaspartate ammonia-lyase 1.